A 575-amino-acid polypeptide reads, in one-letter code: Adenine deaminase 1 (575 aa).

It belongs to the metallo-dependent hydrolases superfamily. Adenine deaminase family. Mn(2+) is required as a cofactor.

It catalyses the reaction adenine + H2O + H(+) = hypoxanthine + NH4(+). In Agrobacterium fabrum (strain C58 / ATCC 33970) (Agrobacterium tumefaciens (strain C58)), this protein is Adenine deaminase 1.